Here is a 152-residue protein sequence, read N- to C-terminus: Sulfur-rich protein (152 aa).

The interval M1–S20 is disordered. The next 2 membrane-spanning stretches (helical) occupy residues V43 to A63 and A69 to L89.

The protein localises to the membrane. The polypeptide is Sulfur-rich protein (srp) (Chlamydia trachomatis serovar A (strain ATCC VR-571B / DSM 19440 / HAR-13)).